Reading from the N-terminus, the 217-residue chain is MSGDGSCSYSAEEGIRELLQSAKAKFRESVDVAIKLSVADSKSGESIRGAVVLPKGLGREVRVAVFAKGEHAKQASSAGADVVGDEELIEEIKKGRRLDVDWCIATPDFMPQISAIAKILGPRGLMPNPKFGTVTLELAEMVGIIKSGQVKFKSDRYGIVHVKIGDIGFTPEDLLENFNAVVAAVQGLRPTTIKGSYVRGVFVNSTMGRSFRIAGTG.

The protein belongs to the universal ribosomal protein uL1 family. As to quaternary structure, part of the 50S ribosomal subunit.

Its function is as follows. Binds directly to 23S rRNA. The L1 stalk is quite mobile in the ribosome, and is involved in E site tRNA release. Functionally, protein L1 is also a translational repressor protein, it controls the translation of the L11 operon by binding to its mRNA. The chain is Large ribosomal subunit protein uL1 from Anaplasma marginale (strain St. Maries).